The sequence spans 81 residues: Photosystem I iron-sulfur center (81 aa).

4Fe-4S ferredoxin-type domains lie at Ser-2–Trp-31 and Ile-39–Tyr-68. The [4Fe-4S] cluster site is built by Cys-11, Cys-14, Cys-17, Cys-21, Cys-48, Cys-51, Cys-54, and Cys-58.

In terms of assembly, the G.violaceus PSI reaction center is composed of one copy each of PsaA,B,C,D,E,F,L,M and Z, and forms trimeric complexes. It depends on [4Fe-4S] cluster as a cofactor.

Its subcellular location is the cell inner membrane. The enzyme catalyses reduced [plastocyanin] + hnu + oxidized [2Fe-2S]-[ferredoxin] = oxidized [plastocyanin] + reduced [2Fe-2S]-[ferredoxin]. Functionally, apoprotein for the two 4Fe-4S centers FA and FB of photosystem I (PSI); essential for photochemical activity. FB is the terminal electron acceptor of PSI, donating electrons to ferredoxin. The C-terminus interacts with PsaA/B/D and helps assemble the protein into the PSI complex. Required for binding of PsaD and PsaE to PSI. PSI is a plastocyanin/cytochrome c6-ferredoxin oxidoreductase, converting photonic excitation into a charge separation, which transfers an electron from the donor P700 chlorophyll pair to the spectroscopically characterized acceptors A0, A1, FX, FA and FB in turn. This chain is Photosystem I iron-sulfur center, found in Gloeobacter violaceus (strain ATCC 29082 / PCC 7421).